The following is a 156-amino-acid chain: MKLNEIKDNEGATKNRKRLGRGIGSGSGKTAGRGVKGQKARSGVAINGFEGGQMPIYRRLPKRGFNNIFASEFVVVSLGRIQAAVDAKKLDASKTVDAAALKAAGVIRRVKDGVRVLADGELKAKVSLEVAGASKPAIEKIEKAGGSINLLSAAAE.

Residues 1-13 show a composition bias toward basic and acidic residues; it reads MKLNEIKDNEGAT. The tract at residues 1-39 is disordered; it reads MKLNEIKDNEGATKNRKRLGRGIGSGSGKTAGRGVKGQK. Gly residues predominate over residues 21-35; it reads RGIGSGSGKTAGRGV.

The protein belongs to the universal ribosomal protein uL15 family. As to quaternary structure, part of the 50S ribosomal subunit.

Its function is as follows. Binds to the 23S rRNA. This chain is Large ribosomal subunit protein uL15, found in Rhizobium meliloti (strain 1021) (Ensifer meliloti).